The primary structure comprises 323 residues: tRNA-dihydrouridine(16) synthase (323 aa).

FMN is bound by residues proline 7–glutamate 9 and glutamine 68. Cysteine 98 (proton donor) is an active-site residue. Residues lysine 139, asparagine 199 to glutamate 201, and glycine 223 to arginine 224 each bind FMN.

It belongs to the Dus family. DusC subfamily. It depends on FMN as a cofactor.

It catalyses the reaction 5,6-dihydrouridine(16) in tRNA + NADP(+) = uridine(16) in tRNA + NADPH + H(+). It carries out the reaction 5,6-dihydrouridine(16) in tRNA + NAD(+) = uridine(16) in tRNA + NADH + H(+). Functionally, catalyzes the synthesis of 5,6-dihydrouridine (D), a modified base found in the D-loop of most tRNAs, via the reduction of the C5-C6 double bond in target uridines. Specifically modifies U16 in tRNAs. This is tRNA-dihydrouridine(16) synthase from Pseudomonas putida (strain ATCC 47054 / DSM 6125 / CFBP 8728 / NCIMB 11950 / KT2440).